The following is a 218-amino-acid chain: DNA-directed RNA polymerase III subunit RPC7-like (218 aa).

A disordered region spans residues 130 to 218 (TIILPKRPPK…SDDNMDEAIY (89 aa)). Residues 139-160 (KSTDDKEETIQKLETLEKKEEE) show a composition bias toward basic and acidic residues. 2 stretches are compositionally biased toward acidic residues: residues 161–193 (VTSEEDEEKEEEEEKEEGEEEEYDEEEHEEETD) and 201–218 (NGEDFGGDSDDNMDEAIY).

This sequence belongs to the eukaryotic RPC7 RNA polymerase subunit family. In terms of assembly, component of the RNA polymerase III (Pol III) complex consisting of 17 subunits. Pol III exists as two alternative complexes defined by the mutually exclusive incorporation of subunit POLR3G/RPC7alpha or POLR3GL/RPC7beta. Found in a trimeric complex with POLR3C/RPC3 and POLR3F/RPC6. Directly interacts with POLR3C. As to expression, expressed in the liver.

Its subcellular location is the nucleus. In terms of biological role, DNA-dependent RNA polymerase catalyzes the transcription of DNA into RNA using the four ribonucleoside triphosphates as substrates. Specific peripheric component of RNA polymerase III which synthesizes small RNAs, such as 5S rRNA and tRNAs. The protein is DNA-directed RNA polymerase III subunit RPC7-like of Mus musculus (Mouse).